The primary structure comprises 168 residues: Protein OPG162 (168 aa).

Residues 15–37 (LSVPAAIMMLLSTIISGIGTFLH) traverse the membrane as a helical segment. Intrachain disulfides connect Cys75-Cys162 and Cys141-Cys154. Asn133 carries N-linked (GlcNAc...) asparagine; by host glycosylation.

This sequence belongs to the orthopoxvirus OPG162 protein family. In terms of assembly, interacts with protein OPG161. Interacts with protein OPG164. Interacts with protein OPG190.

The protein resides in the virion membrane. It localises to the host Golgi apparatus. In terms of biological role, forms a complex with OPG162 and OPG190 to coordinate the incorporation of OPG164 into wrapped enveloped virion (EV) membranes and, subsequently, the production of actin tails. Therefore plays an essential role in efficient cell-to-cell spread of viral particles. This Monkeypox virus protein is Protein OPG162 (OPG162).